We begin with the raw amino-acid sequence, 278 residues long: Digeranylgeranylglyceryl phosphate synthase (278 aa).

The next 8 helical transmembrane spans lie at 15-35, 36-56, 89-109, 133-153, 159-179, 203-223, 225-245, and 258-278; these read VIGS…WKIV, PIKL…GYII, IVLF…AFII, LIVA…FFEG, TLIP…VKGI, WFIS…PYFF, FNII…LVVL, and AYMK…TLPI.

It belongs to the UbiA prenyltransferase family. DGGGP synthase subfamily. Requires Mg(2+) as cofactor.

It localises to the cell membrane. It carries out the reaction sn-3-O-(geranylgeranyl)glycerol 1-phosphate + (2E,6E,10E)-geranylgeranyl diphosphate = 2,3-bis-O-(geranylgeranyl)-sn-glycerol 1-phosphate + diphosphate. The protein operates within membrane lipid metabolism; glycerophospholipid metabolism. Prenyltransferase that catalyzes the transfer of the geranylgeranyl moiety of geranylgeranyl diphosphate (GGPP) to the C2 hydroxyl of (S)-3-O-geranylgeranylglyceryl phosphate (GGGP). This reaction is the second ether-bond-formation step in the biosynthesis of archaeal membrane lipids. This is Digeranylgeranylglyceryl phosphate synthase from Sulfurisphaera tokodaii (strain DSM 16993 / JCM 10545 / NBRC 100140 / 7) (Sulfolobus tokodaii).